Reading from the N-terminus, the 329-residue chain is 4-hydroxythreonine-4-phosphate dehydrogenase (329 aa).

Substrate-binding residues include histidine 136 and threonine 137. A divalent metal cation contacts are provided by histidine 166, histidine 211, and histidine 266. The substrate site is built by lysine 274, asparagine 283, and arginine 292.

This sequence belongs to the PdxA family. Homodimer. The cofactor is Zn(2+). Mg(2+) serves as cofactor. Requires Co(2+) as cofactor.

It localises to the cytoplasm. The enzyme catalyses 4-(phosphooxy)-L-threonine + NAD(+) = 3-amino-2-oxopropyl phosphate + CO2 + NADH. It functions in the pathway cofactor biosynthesis; pyridoxine 5'-phosphate biosynthesis; pyridoxine 5'-phosphate from D-erythrose 4-phosphate: step 4/5. Its function is as follows. Catalyzes the NAD(P)-dependent oxidation of 4-(phosphooxy)-L-threonine (HTP) into 2-amino-3-oxo-4-(phosphooxy)butyric acid which spontaneously decarboxylates to form 3-amino-2-oxopropyl phosphate (AHAP). The chain is 4-hydroxythreonine-4-phosphate dehydrogenase from Neisseria meningitidis serogroup A / serotype 4A (strain DSM 15465 / Z2491).